The following is a 463-amino-acid chain: Adenosylhomocysteinase (463 aa).

3 residues coordinate substrate: Thr54, Asp128, and Glu189. Position 190 to 192 (190 to 192 (TTT)) interacts with NAD(+). Residues Lys219 and Asp223 each coordinate substrate. NAD(+) contacts are provided by residues Asn224, 253 to 258 (GYGDVG), Glu276, Asn311, 332 to 334 (IGH), and Asn377.

Belongs to the adenosylhomocysteinase family. In terms of assembly, homotetramer. Requires NAD(+) as cofactor.

The protein localises to the cytoplasm. The catalysed reaction is S-adenosyl-L-homocysteine + H2O = L-homocysteine + adenosine. The protein operates within amino-acid biosynthesis; L-homocysteine biosynthesis; L-homocysteine from S-adenosyl-L-homocysteine: step 1/1. Its function is as follows. May play a key role in the regulation of the intracellular concentration of adenosylhomocysteine. The sequence is that of Adenosylhomocysteinase from Rhodobacter capsulatus (strain ATCC BAA-309 / NBRC 16581 / SB1003).